We begin with the raw amino-acid sequence, 173 residues long: Photosystem I assembly protein Ycf3 (173 aa).

TPR repeat units lie at residues Ala35–Pro68, Gly72–Gln105, and Gly120–Gly153.

Belongs to the Ycf3 family.

The protein resides in the cellular thylakoid membrane. Functionally, essential for the assembly of the photosystem I (PSI) complex. May act as a chaperone-like factor to guide the assembly of the PSI subunits. The polypeptide is Photosystem I assembly protein Ycf3 (Prochlorococcus marinus (strain MIT 9211)).